The sequence spans 365 residues: Spermidine/putrescine import ATP-binding protein PotA (365 aa).

An ABC transporter domain is found at 7–237 (LTLADITKRF…PNNLFVASFI (231 aa)). 39 to 46 (GPSGCGKT) is a binding site for ATP.

The protein belongs to the ABC transporter superfamily. Spermidine/putrescine importer (TC 3.A.1.11.1) family. The complex is composed of two ATP-binding proteins (PotA), two transmembrane proteins (PotB and PotC) and a solute-binding protein (PotD).

The protein resides in the cell inner membrane. It catalyses the reaction ATP + H2O + polyamine-[polyamine-binding protein]Side 1 = ADP + phosphate + polyamineSide 2 + [polyamine-binding protein]Side 1.. Part of the ABC transporter complex PotABCD involved in spermidine/putrescine import. Responsible for energy coupling to the transport system. This is Spermidine/putrescine import ATP-binding protein PotA from Hahella chejuensis (strain KCTC 2396).